Reading from the N-terminus, the 368-residue chain is Dual-specificity RNA methyltransferase RlmN (368 aa).

Glutamate 94 acts as the Proton acceptor in catalysis. The region spanning 100–334 is the Radical SAM core domain; sequence EEDRATLCVS…VIVRKTRGDD (235 aa). Cysteine 107 and cysteine 339 are joined by a disulfide. 3 residues coordinate [4Fe-4S] cluster: cysteine 114, cysteine 118, and cysteine 121. S-adenosyl-L-methionine is bound by residues 163–164, serine 195, 217–219, and asparagine 296; these read GE and SLH. Cysteine 339 (S-methylcysteine intermediate) is an active-site residue.

Belongs to the radical SAM superfamily. RlmN family. [4Fe-4S] cluster is required as a cofactor.

The protein resides in the cytoplasm. The catalysed reaction is adenosine(2503) in 23S rRNA + 2 reduced [2Fe-2S]-[ferredoxin] + 2 S-adenosyl-L-methionine = 2-methyladenosine(2503) in 23S rRNA + 5'-deoxyadenosine + L-methionine + 2 oxidized [2Fe-2S]-[ferredoxin] + S-adenosyl-L-homocysteine. It catalyses the reaction adenosine(37) in tRNA + 2 reduced [2Fe-2S]-[ferredoxin] + 2 S-adenosyl-L-methionine = 2-methyladenosine(37) in tRNA + 5'-deoxyadenosine + L-methionine + 2 oxidized [2Fe-2S]-[ferredoxin] + S-adenosyl-L-homocysteine. In terms of biological role, specifically methylates position 2 of adenine 2503 in 23S rRNA and position 2 of adenine 37 in tRNAs. m2A2503 modification seems to play a crucial role in the proofreading step occurring at the peptidyl transferase center and thus would serve to optimize ribosomal fidelity. The sequence is that of Dual-specificity RNA methyltransferase RlmN from Aeromonas salmonicida (strain A449).